The chain runs to 569 residues: Amyloid-beta A4 precursor protein-binding family A member 3 (569 aa).

Met-1 carries the post-translational modification N-acetylmethionine. Disordered stretches follow at residues 1–53 (MEFL…MELD) and 124–168 (AQSV…SSPE). Positions 19–32 (EEPKGPEVPSEDHP) are enriched in basic and acidic residues. A compositionally biased stretch (low complexity) spans 132-141 (AQAAPRLLQP). A phosphoserine mark is found at Ser-166 and Ser-367. Residues 212–376 (DGVLFGAKYL…SASASHPHNG (165 aa)) form the PID domain. 2 PDZ domains span residues 389 to 475 (EVCI…IIHC) and 480 to 554 (TAVI…TMPA).

As to quaternary structure, binds to the cytoplasmic domain of amyloid protein (APP). Interacts with HIF1AN (via N-terminus). Interacts with NECAB3; seems to mediate the interaction between NECAB3 and HIF1AN. Ubiquitous.

The protein localises to the cytoplasm. It localises to the perinuclear region. Functionally, may modulate processing of the amyloid-beta precursor protein (APP) and hence formation of APP-beta. May enhance the activity of HIF1A in macrophages by inhibiting the activity of HIF1AN. This is Amyloid-beta A4 precursor protein-binding family A member 3 (Apba3) from Rattus norvegicus (Rat).